The sequence spans 274 residues: Undecaprenyl-diphosphatase (274 aa).

7 helical membrane-spanning segments follow: residues 4–24, 41–61, 83–103, 108–128, 184–204, 218–238, and 246–266; these read PLFV…FLPI, DATS…AVCW, FVGL…MFHS, LLFN…LILW, AAEF…VYDL, VFAI…KAFI, and FIAF…TWQL.

Belongs to the UppP family.

Its subcellular location is the cell inner membrane. The enzyme catalyses di-trans,octa-cis-undecaprenyl diphosphate + H2O = di-trans,octa-cis-undecaprenyl phosphate + phosphate + H(+). Functionally, catalyzes the dephosphorylation of undecaprenyl diphosphate (UPP). Confers resistance to bacitracin. This Aromatoleum aromaticum (strain DSM 19018 / LMG 30748 / EbN1) (Azoarcus sp. (strain EbN1)) protein is Undecaprenyl-diphosphatase.